Here is a 42-residue protein sequence, read N- to C-terminus: Photosystem I reaction center subunit IX (42 aa).

The helical transmembrane segment at 7–27 threads the bilayer; it reads FLSTAPVLIMALLTVTAGILI.

Belongs to the PsaJ family.

It is found in the cellular thylakoid membrane. May help in the organization of the PsaE and PsaF subunits. In Crocosphaera subtropica (strain ATCC 51142 / BH68) (Cyanothece sp. (strain ATCC 51142)), this protein is Photosystem I reaction center subunit IX.